Here is a 101-residue protein sequence, read N- to C-terminus: NAD(P)H-quinone oxidoreductase subunit 4L, chloroplastic (101 aa).

Transmembrane regions (helical) follow at residues 2 to 22, 32 to 52, and 61 to 81; these read MLEYVLGLSAYLFSIGIYGLI, MCLELILNAVNINFVTFSDFF, and IFSIFVISIAAAEAAIGPAIV.

Belongs to the complex I subunit 4L family. As to quaternary structure, NDH is composed of at least 16 different subunits, 5 of which are encoded in the nucleus.

The protein localises to the plastid. Its subcellular location is the chloroplast thylakoid membrane. The catalysed reaction is a plastoquinone + NADH + (n+1) H(+)(in) = a plastoquinol + NAD(+) + n H(+)(out). The enzyme catalyses a plastoquinone + NADPH + (n+1) H(+)(in) = a plastoquinol + NADP(+) + n H(+)(out). NDH shuttles electrons from NAD(P)H:plastoquinone, via FMN and iron-sulfur (Fe-S) centers, to quinones in the photosynthetic chain and possibly in a chloroplast respiratory chain. The immediate electron acceptor for the enzyme in this species is believed to be plastoquinone. Couples the redox reaction to proton translocation, and thus conserves the redox energy in a proton gradient. This chain is NAD(P)H-quinone oxidoreductase subunit 4L, chloroplastic, found in Populus trichocarpa (Western balsam poplar).